Here is a 207-residue protein sequence, read N- to C-terminus: Large ribosomal subunit protein uL4 (207 aa).

Positions 48 to 86 (THKVKNRSEVRGGGRKPWRQKGTGRARQGSIRSPQWRGG) are disordered. Positions 60–71 (GGRKPWRQKGTG) are enriched in basic residues.

Belongs to the universal ribosomal protein uL4 family. Part of the 50S ribosomal subunit.

In terms of biological role, one of the primary rRNA binding proteins, this protein initially binds near the 5'-end of the 23S rRNA. It is important during the early stages of 50S assembly. It makes multiple contacts with different domains of the 23S rRNA in the assembled 50S subunit and ribosome. Forms part of the polypeptide exit tunnel. In Bacillus licheniformis (strain ATCC 14580 / DSM 13 / JCM 2505 / CCUG 7422 / NBRC 12200 / NCIMB 9375 / NCTC 10341 / NRRL NRS-1264 / Gibson 46), this protein is Large ribosomal subunit protein uL4.